Here is a 448-residue protein sequence, read N- to C-terminus: Tryptophan dimethylallyltransferase 1 (448 aa).

Residues 80–81 and E89 each bind L-tryptophan; that span reads IL. Substrate is bound by residues R100, K186, and Y188. L-tryptophan-binding residues include Y190 and R249. R262, K264, Y266, Q348, Y350, Y414, and Y418 together coordinate substrate.

It belongs to the tryptophan dimethylallyltransferase family. In terms of assembly, homodimer.

It carries out the reaction L-tryptophan + dimethylallyl diphosphate = 4-(3-methylbut-2-enyl)-L-tryptophan + diphosphate. It participates in alkaloid biosynthesis; ergot alkaloid biosynthesis. Its function is as follows. Tryptophan dimethylallyltransferase; part of the gene cluster that mediates the biosynthesis of fungal ergot alkaloid. DmaW catalyzes the first step of ergot alkaloid biosynthesis by condensing dimethylallyl diphosphate (DMAP) and tryptophan to form 4-dimethylallyl-L-tryptophan. The second step is catalyzed by the methyltransferase easF that methylates 4-dimethylallyl-L-tryptophan in the presence of S-adenosyl-L-methionine, resulting in the formation of 4-dimethylallyl-L-abrine. The catalase easC and the FAD-dependent oxidoreductase easE then transform 4-dimethylallyl-L-abrine to chanoclavine-I which is further oxidized by easD in the presence of NAD(+), resulting in the formation of chanoclavine-I aldehyde. Agroclavine dehydrogenase easG then mediates the conversion of chanoclavine-I aldehyde to agroclavine via a non-enzymatic adduct reaction: the substrate is an iminium intermediate that is formed spontaneously from chanoclavine-I aldehyde in the presence of glutathione. The presence of easA is not required to complete this reaction. Further conversion of agroclavine to paspalic acid is a two-step process involving oxidation of agroclavine to elymoclavine and of elymoclavine to paspalic acid, the second step being performed by the elymoclavine oxidase cloA. Paspalic acid is then further converted to D-lysergic acid. Ergopeptines are assembled from D-lysergic acid and three different amino acids by the D-lysergyl-peptide-synthetases composed each of a monomudular and a trimodular nonribosomal peptide synthetase subunit. LpsB and lpsC encode the monomodular subunits responsible for D-lysergic acid activation and incorporation into the ergopeptine backbone. LpsA1 and A2 subunits encode the trimodular nonribosomal peptide synthetase assembling the tripeptide portion of ergopeptines. LpsA1 is responsible for formation of the major ergopeptine, ergotamine, and lpsA2 for alpha-ergocryptine, the minor ergopeptine of the total alkaloid mixture elaborated by C.purpurea. D-lysergyl-tripeptides are assembled by the nonribosomal peptide synthetases and released as N-(D-lysergyl-aminoacyl)-lactams. Cyclolization of the D-lysergyl-tripeptides is performed by the Fe(2+)/2-ketoglutarate-dependent dioxygenase easH which introduces a hydroxyl group into N-(D-lysergyl-aminoacyl)-lactam at alpha-C of the aminoacyl residue followed by spontaneous condensation with the terminal lactam carbonyl group. This is Tryptophan dimethylallyltransferase 1 from Claviceps purpurea (strain 20.1) (Ergot fungus).